We begin with the raw amino-acid sequence, 279 residues long: Tryptophan 2,3-dioxygenase (279 aa).

Residues 48 to 52, Tyr110, and Arg114 contribute to the substrate site; that span reads FIVIH. His237 contacts heme. Position 251 (Thr251) interacts with substrate.

It belongs to the tryptophan 2,3-dioxygenase family. As to quaternary structure, homotetramer. Heme is required as a cofactor.

It catalyses the reaction L-tryptophan + O2 = N-formyl-L-kynurenine. The protein operates within amino-acid degradation; L-tryptophan degradation via kynurenine pathway; L-kynurenine from L-tryptophan: step 1/2. Its function is as follows. Heme-dependent dioxygenase that catalyzes the oxidative cleavage of the L-tryptophan (L-Trp) pyrrole ring and converts L-tryptophan to N-formyl-L-kynurenine. Catalyzes the oxidative cleavage of the indole moiety. The chain is Tryptophan 2,3-dioxygenase from Bacillus cereus (strain ZK / E33L).